The sequence spans 335 residues: Glucokinase (335 aa).

Residue 11–16 (ADIGGT) coordinates ATP.

The protein belongs to the bacterial glucokinase family.

The protein resides in the cytoplasm. The catalysed reaction is D-glucose + ATP = D-glucose 6-phosphate + ADP + H(+). The protein is Glucokinase of Stenotrophomonas maltophilia (strain R551-3).